The following is a 338-amino-acid chain: Lipoate-protein ligase A (338 aa).

The 188-residue stretch at 29–216 folds into the BPL/LPL catalytic domain; it reads DPNQRVLFLW…AFFSHYGERV (188 aa). Residues Arg-71, 76–79, and Lys-134 contribute to the ATP site; that span reads GAVF. Lys-134 lines the (R)-lipoate pocket.

The protein belongs to the LplA family. As to quaternary structure, monomer.

The protein resides in the cytoplasm. It catalyses the reaction L-lysyl-[lipoyl-carrier protein] + (R)-lipoate + ATP = N(6)-[(R)-lipoyl]-L-lysyl-[lipoyl-carrier protein] + AMP + diphosphate + H(+). It functions in the pathway protein modification; protein lipoylation via exogenous pathway; protein N(6)-(lipoyl)lysine from lipoate: step 1/2. Its pathway is protein modification; protein lipoylation via exogenous pathway; protein N(6)-(lipoyl)lysine from lipoate: step 2/2. Catalyzes both the ATP-dependent activation of exogenously supplied lipoate to lipoyl-AMP and the transfer of the activated lipoyl onto the lipoyl domains of lipoate-dependent enzymes. In Aeromonas hydrophila subsp. hydrophila (strain ATCC 7966 / DSM 30187 / BCRC 13018 / CCUG 14551 / JCM 1027 / KCTC 2358 / NCIMB 9240 / NCTC 8049), this protein is Lipoate-protein ligase A.